The sequence spans 488 residues: V-type proton ATPase subunit B 1 (488 aa).

It belongs to the ATPase alpha/beta chains family. As to quaternary structure, V-ATPase is a heteromultimeric enzyme composed of a peripheral catalytic V1 complex (main components: subunits A, B, C, D, E, and F) attached to an integral membrane V0 proton pore complex (main component: the proteolipid protein).

In terms of biological role, non-catalytic subunit of the peripheral V1 complex of vacuolar ATPase. V-ATPase is responsible for acidifying a variety of intracellular compartments in eukaryotic cells. The polypeptide is V-type proton ATPase subunit B 1 (Gossypium hirsutum (Upland cotton)).